The following is a 525-amino-acid chain: Peptide chain release factor 3 (525 aa).

One can recognise a tr-type G domain in the interval 9-276 (AKRRTFAIIS…GFTRYAPAPQ (268 aa)). GTP is bound by residues 18–25 (SHPDAGKT), 86–90 (DTPGH), and 140–143 (NKFD).

Belongs to the TRAFAC class translation factor GTPase superfamily. Classic translation factor GTPase family. PrfC subfamily.

It is found in the cytoplasm. In terms of biological role, increases the formation of ribosomal termination complexes and stimulates activities of RF-1 and RF-2. It binds guanine nucleotides and has strong preference for UGA stop codons. It may interact directly with the ribosome. The stimulation of RF-1 and RF-2 is significantly reduced by GTP and GDP, but not by GMP. This is Peptide chain release factor 3 from Francisella tularensis subsp. tularensis (strain FSC 198).